Here is a 332-residue protein sequence, read N- to C-terminus: F-box/SPRY domain-containing protein 1 (332 aa).

Residues 1–82 (MAENDGETIV…RSPRRPEVSA (82 aa)) are disordered. 2 stretches are compositionally biased toward polar residues: residues 15–28 (CNLT…SSGL) and 49–64 (NPSS…QLTP). The 49-residue stretch at 79-127 (EVSASRLPLKVLNQIFQYLPLKDLRSAMLTCHSWNNALSMEDSDIWQYL) folds into the F-box domain. Positions 138 to 330 (SDPFLLAELG…VTMVYVGSPQ (193 aa)) constitute a B30.2/SPRY domain.

It belongs to the FBXO45/Fsn family. In terms of assembly, component of an SCF (SKP1-CUL1-F-box protein) E3 ubiquitin ligase complex composed of cul-1, fsn-1, rpm-1 and skr-1. Interacts (via SPRY domain) with scd-2 (via cytoplasmic domain). Interacts (via SPRY domain) with convertase egl-3 (via C-terminus). Expressed in GABAergic neuromuscular junctions (NMJs).

It localises to the synapse. The protein operates within protein modification; protein ubiquitination. In terms of biological role, component of a SCF (SKP1-CUL1-F-box protein) E3 ubiquitin ligase complex which is required for the restriction and/or maturation of synapses in GABAergic neuromuscular junction (NMJ) presynaptic neurons. Promotes NRJ synapse development and synaptic transmission by negatively regulating the daf-2/InsR pathway in muscles. By targeting convertase egl-3 for degradation, negatively modulates insulin-like protein ins-4 and ins-6 processing. May stabilize synapse formation by promoting the down-regulation of scd-2. Regulates axon termination in PLM and ALM neurons. The chain is F-box/SPRY domain-containing protein 1 (fsn-1) from Caenorhabditis elegans.